The sequence spans 217 residues: Protein TNT (217 aa).

Residues 1–217 (MSLVPGQHCS…HSTKQTGGKE (217 aa)) are disordered. 2 stretches are compositionally biased toward polar residues: residues 20 to 36 (SPIT…TEFS) and 45 to 61 (TSPQ…SQGP). 2 stretches are compositionally biased toward low complexity: residues 91-104 (EPSL…LQSP) and 128-139 (QSSESHVSSVQH). Polar residues-rich tracts occupy residues 177-191 (RLNT…SQLG) and 207-217 (AHSTKQTGGKE).

In terms of tissue distribution, preferentially expressed in teratocarcinoma rather than in normal testis.

This is Protein TNT (C16orf82) from Homo sapiens (Human).